The sequence spans 825 residues: Putative NAD(+)--arginine ADP-ribosyltransferase Mav (825 aa).

The interval A435 to H673 is disordered. Pro residues-rich tracts occupy residues P443–P457 and S468–H491. Low complexity predominate over residues P560–G579. A compositionally biased stretch (pro residues) spans P580–P589. Over residues E590–S599 the composition is skewed to low complexity. Residues K650 to R825 enclose the TR mART core domain. Residues G656–L670 are compositionally biased toward basic and acidic residues. NAD(+) contacts are provided by residues T687 to R699, R730 to N733, and E750. Residue R730 is part of the active site. Active-site residues include S755 and E795. Residue E795 participates in NAD(+) binding.

This sequence belongs to the Arg-specific ADP-ribosyltransferase family.

It localises to the secreted. The enzyme catalyses L-arginyl-[protein] + NAD(+) = N(omega)-(ADP-D-ribosyl)-L-arginyl-[protein] + nicotinamide + H(+). Its function is as follows. A probable mono(ADP-ribosyl)transferase, it may ADP-ribosylate Arg in target protein(s). This Mycobacterium avium (strain 104) protein is Putative NAD(+)--arginine ADP-ribosyltransferase Mav.